Here is a 247-residue protein sequence, read N- to C-terminus: Caffeoyl-CoA O-methyltransferase 1 (247 aa).

Lys-21 serves as a coordination point for substrate. S-adenosyl-L-methionine-binding positions include Thr-63, Glu-85, 87–88 (GV), Ser-93, Asp-111, and Ala-140. Asp-163 provides a ligand contact to substrate. Asp-163 contributes to the a divalent metal cation binding site. Asp-165 serves as a coordination point for S-adenosyl-L-methionine. 2 residues coordinate a divalent metal cation: Asp-189 and Asn-190. Asn-194 lines the substrate pocket.

It belongs to the class I-like SAM-binding methyltransferase superfamily. Cation-dependent O-methyltransferase family. CCoAMT subfamily. The cofactor is a divalent metal cation.

The catalysed reaction is (E)-caffeoyl-CoA + S-adenosyl-L-methionine = (E)-feruloyl-CoA + S-adenosyl-L-homocysteine + H(+). It functions in the pathway aromatic compound metabolism; phenylpropanoid biosynthesis. Methylates caffeoyl-CoA to feruloyl-CoA and 5-hydroxyferuloyl-CoA to sinapoyl-CoA. Plays a role in the synthesis of feruloylated polysaccharides. Involved in the reinforcement of the plant cell wall. Also involved in the responding to wounding or pathogen challenge by the increased formation of cell wall-bound ferulic acid polymers. This Populus trichocarpa (Western balsam poplar) protein is Caffeoyl-CoA O-methyltransferase 1 (CCOAOMT1).